The chain runs to 171 residues: Neudesin (171 aa).

A signal peptide spans 1–30; the sequence is MARPAPWWWLRPLAALALALALVRVPSARA. A Cytochrome b5 heme-binding domain is found at 43–128; that stretch reads VRLFTEEELA…KELEALDDIF (86 aa). The residue at position 135 (Lys135) is an N6-acetyllysine. A disordered region spans residues 151 to 171; the sequence is GSPNLDFKPEDQPHFDIKDEF. Residues 157 to 171 show a composition bias toward basic and acidic residues; it reads FKPEDQPHFDIKDEF.

The protein belongs to the cytochrome b5 family. MAPR subfamily. In terms of assembly, interacts with PINK1 and PARK7.

It is found in the secreted. The protein resides in the extracellular space. It localises to the mitochondrion. The protein localises to the endoplasmic reticulum. Its function is as follows. Acts as a neurotrophic factor in postnatal mature neurons enhancing neuronal survival. Promotes cell proliferation and neurogenesis in undifferentiated neural progenitor cells at the embryonic stage and inhibits differentiation of astrocytes. Its neurotrophic activity is exerted via MAPK1/ERK2, MAPK3/ERK1 and AKT1/AKT pathways. Neurotrophic activity is enhanced by binding to heme. Also acts as an anorexigenic neurotrophic factor that contributes to energy balance. The chain is Neudesin from Rattus norvegicus (Rat).